Here is a 188-residue protein sequence, read N- to C-terminus: Ribosome-recycling factor (188 aa).

It belongs to the RRF family.

The protein resides in the cytoplasm. Its function is as follows. Responsible for the release of ribosomes from messenger RNA at the termination of protein biosynthesis. May increase the efficiency of translation by recycling ribosomes from one round of translation to another. This Bradyrhizobium diazoefficiens (strain JCM 10833 / BCRC 13528 / IAM 13628 / NBRC 14792 / USDA 110) protein is Ribosome-recycling factor.